We begin with the raw amino-acid sequence, 226 residues long: Protein FMP52-1, mitochondrial (226 aa).

The transit peptide at 1 to 43 directs the protein to the mitochondrion; that stretch reads MSAFVLGSTGLVGLQILKVLDSSTAFKKVSTVSRRLPSVTSGK.

Belongs to the FMP52 family.

It is found in the mitochondrion outer membrane. This chain is Protein FMP52-1, mitochondrial (FMP521), found in Scheffersomyces stipitis (strain ATCC 58785 / CBS 6054 / NBRC 10063 / NRRL Y-11545) (Yeast).